Here is a 420-residue protein sequence, read N- to C-terminus: Pre-mRNA-splicing factor RBM22 (420 aa).

At A2 the chain carries N-acetylalanine. Residues S4 and S102 each carry the phosphoserine modification. Residues K139 and K149 each participate in a glycyl lysine isopeptide (Lys-Gly) (interchain with G-Cter in SUMO2) cross-link. The C3H1-type zinc-finger motif lies at 159 to 186 (RNRPHICSFWVKGECKRGEECPYRHEKP). Position 212 is an N6-acetyllysine (K212). An RRM domain is found at 232 to 305 (TTLYVGGLGD…RRLNVKWGRS (74 aa)). A Glycyl lysine isopeptide (Lys-Gly) (interchain with G-Cter in SUMO2) cross-link involves residue K290. 2 disordered regions span residues 303–343 (GRSQ…AAEE) and 372–420 (APPP…HSSP). Residues 309–318 (RGKEKEKDGT) are compositionally biased toward basic and acidic residues.

This sequence belongs to the SLT11 family. Component of the pre-catalytic and catalytic spliceosome complexes. Component of the postcatalytic spliceosome P complex. Interacts with PDCD6; the interaction induces translocation of PDCD6 in the cytoplasm. Interacts with PPIL1.

It localises to the nucleus. The protein localises to the cytoplasm. Its function is as follows. Required for pre-mRNA splicing as component of the activated spliceosome. Involved in the first step of pre-mRNA splicing. Binds directly to the internal stem-loop (ISL) domain of the U6 snRNA and to the pre-mRNA intron near the 5' splice site during the activation and catalytic phases of the spliceosome cycle. Involved in both translocations of the nuclear SLU7 to the cytoplasm and the cytosolic calcium-binding protein PDCD6 to the nucleus upon cellular stress responses. In Homo sapiens (Human), this protein is Pre-mRNA-splicing factor RBM22 (RBM22).